Consider the following 68-residue polypeptide: Small ribosomal subunit protein eS17 (68 aa).

This sequence belongs to the eukaryotic ribosomal protein eS17 family.

The polypeptide is Small ribosomal subunit protein eS17 (Staphylothermus marinus (strain ATCC 43588 / DSM 3639 / JCM 9404 / F1)).